The following is a 242-amino-acid chain: Orotidine 5'-phosphate decarboxylase (242 aa).

Residues Asp16, Lys37, 64–73, Thr128, Arg190, Gln199, Gly219, and Arg220 each bind substrate; that span reads DLKFHDIPNT. Lys66 acts as the Proton donor in catalysis.

The protein belongs to the OMP decarboxylase family. Type 1 subfamily. Homodimer.

The catalysed reaction is orotidine 5'-phosphate + H(+) = UMP + CO2. The protein operates within pyrimidine metabolism; UMP biosynthesis via de novo pathway; UMP from orotate: step 2/2. Its function is as follows. Catalyzes the decarboxylation of orotidine 5'-monophosphate (OMP) to uridine 5'-monophosphate (UMP). The sequence is that of Orotidine 5'-phosphate decarboxylase from Prochlorococcus marinus (strain MIT 9312).